The chain runs to 515 residues: Pisatin demethylase (515 aa).

Cysteine 453 lines the heme pocket.

It belongs to the cytochrome P450 family. The cofactor is heme.

Its function is as follows. Can detoxify the phytoalexin pisatin from garden pea. Pisatin is an antimicrobial compound produced by pea in response to infection by plant pathogens. The protein is Pisatin demethylase (PDAT9) of Fusarium vanettenii (Neocosmospora pisi).